The sequence spans 438 residues: L-fucose-proton symporter (438 aa).

At 2–26 (GNTSIQTQSYRAVDKDAGQSRSYII) the chain is on the cytoplasmic side. Residues 27 to 53 (PFALLCSLFFLWAVANNLNDILLPQFQ) traverse the membrane as a helical segment. Over 54–61 (QAFTLTNF) the chain is Periplasmic. The helical transmembrane segment at 62 to 87 (QAGLIQSAFYFGYFIIPIPAGILMKK) threads the bilayer. Topologically, residues 88–90 (LSY) are cytoplasmic. Residues 91–113 (KAGIITGLFLYALGAALFWPAAE) traverse the membrane as a helical segment. Residues 114-117 (IMNY) are Periplasmic-facing. Residues 118–144 (TLFLVGLFIIAAGLGCLETAANPFVTV) form a helical membrane-spanning segment. Residues 145–150 (LGPESS) are Cytoplasmic-facing. The helical transmembrane segment at 151–178 (GHFRLNLAQTFNSFGAIIAVVFGQSLIL) threads the bilayer. Residues 179–193 (SNVPHQSQDVLDKMS) are Periplasmic-facing. Residues 194–227 (PEQLSAYKHSLVLSVQTPYMIIVAIVLLVALLIM) traverse the membrane as a helical segment. Residues 228–257 (LTKFPALQSDNHSDAKQGSFSASLSRLARI) are Cytoplasmic-facing. Residues 258–287 (RHWRWAVLAQFCYVGAQTACWSYLIRYAVE) traverse the membrane as a helical segment. Over 288 to 293 (EIPGMT) the chain is Periplasmic. Residues 294–319 (AGFAANYLTGTMVCFFIGRFTGTWLI) traverse the membrane as a helical segment. Residues 320–324 (SRFAP) are Cytoplasmic-facing. A helical membrane pass occupies residues 325–343 (HKVLAAYALIAMALCLISA). Topologically, residues 344–347 (FAGG) are periplasmic. The chain crosses the membrane as a helical span at residues 348-372 (HVGLIALTLCSAFMSIQYPTIFSLG). The Cytoplasmic segment spans residues 373-379 (IKNLGQD). The helical transmembrane segment at 380-407 (TKYGSSFIVMTIIGGGIVTPVMGFVSDA) threads the bilayer. At 408–410 (AGN) the chain is on the periplasmic side. The helical transmembrane segment at 411-430 (IPTAELIPALCFAVIFIFAR) threads the bilayer. The Cytoplasmic segment spans residues 431–438 (FRSQTATN).

Belongs to the major facilitator superfamily. FHS transporter (TC 2.A.1.7) family.

It is found in the cell inner membrane. It carries out the reaction L-fucose(in) + H(+)(in) = L-fucose(out) + H(+)(out). The enzyme catalyses D-arabinose(out) + H(+)(out) = D-arabinose(in) + H(+)(in). It catalyses the reaction L-galactose(out) + H(+)(out) = L-galactose(in) + H(+)(in). In terms of biological role, mediates the uptake of L-fucose across the boundary membrane with the concomitant transport of protons into the cell (symport system). Can also transport L-galactose and D-arabinose, but at reduced rates compared with L-fucose. Is not able to transport L-rhamnose and L-arabinose. Binds D-arabinose with the highest affinity, followed by L-fucose, and then by L-galactose. The chain is L-fucose-proton symporter (fucP) from Escherichia coli (strain K12).